The following is a 456-amino-acid chain: MTQNENPSAQSGAKPEDKARPAKALQGVKGMNDMLPADAPLWEHFENAARAMLRAYGYQQIRTPIVEHTQLFVRGIGEVTDIVEKEMYSFTDALNGEQLTLRPEGTAAAVRATIEHNLLYDGPKRLWYTGPMFRHERPQRGRYRQFHQLGAEALGFAGPDVDAEIILMCQRLWDDLGLTGVRLEINSLGQAHERAAHREELIKYLEGFKDILDEDGKRRLYTNPLRVLDTKNPALQEMAANAPKLIDFLGEESLAHFEGVQRLLKANNIPYKINPRLVRGLDYYNLTVFEWITDKLGAQGTIAGGGRYDPLIAQMGGKAAPACGWAMGIERIIELIREEGVVPDAVGCDVYLVHQGEAAQQQATVAAERLRDAGLDVVLHATPDGKSGSFKSQMKRADASGAAYAVIIGEDEVAAGVVQVKELRQGAQAEGGGQQAQVPAENLVDYLIDAMVGASE.

Over residues 1 to 11 (MTQNENPSAQS) the composition is skewed to polar residues. The disordered stretch occupies residues 1 to 22 (MTQNENPSAQSGAKPEDKARPA).

This sequence belongs to the class-II aminoacyl-tRNA synthetase family. Homodimer.

It localises to the cytoplasm. It carries out the reaction tRNA(His) + L-histidine + ATP = L-histidyl-tRNA(His) + AMP + diphosphate + H(+). The chain is Histidine--tRNA ligase from Cupriavidus pinatubonensis (strain JMP 134 / LMG 1197) (Cupriavidus necator (strain JMP 134)).